A 777-amino-acid polypeptide reads, in one-letter code: Translation initiation factor IF-2 (777 aa).

Disordered stretches follow at residues 30–54 (SPSMGATIVKKRRRKTHDTEEQDEN) and 98–117 (EDSNEKTNDRDSATNTSFKE). Residues 98–109 (EDSNEKTNDRDS) are compositionally biased toward basic and acidic residues. Positions 279–449 (PKPPIVTFMG…LLIAELMKLE (171 aa)) constitute a tr-type G domain. The G1 stretch occupies residues 288 to 295 (GHVDHGKT). 288–295 (GHVDHGKT) contacts GTP. Residues 313-317 (GITQH) are G2. The tract at residues 334–337 (DTPG) is G3. Residues 334-338 (DTPGH) and 388-391 (NKID) contribute to the GTP site. Residues 388 to 391 (NKID) form a G4 region. Residues 425–427 (SAK) form a G5 region.

It belongs to the TRAFAC class translation factor GTPase superfamily. Classic translation factor GTPase family. IF-2 subfamily.

It is found in the cytoplasm. Functionally, one of the essential components for the initiation of protein synthesis. Protects formylmethionyl-tRNA from spontaneous hydrolysis and promotes its binding to the 30S ribosomal subunits. Also involved in the hydrolysis of GTP during the formation of the 70S ribosomal complex. The protein is Translation initiation factor IF-2 of Wolbachia sp. subsp. Brugia malayi (strain TRS).